The primary structure comprises 525 residues: GMP synthase [glutamine-hydrolyzing] (525 aa).

The region spanning 9-207 (RILILDFGSQ…VRDICQCEAL (199 aa)) is the Glutamine amidotransferase type-1 domain. C86 serves as the catalytic Nucleophile. Catalysis depends on residues H181 and E183. Positions 208–400 (WTPAKIIDDA…LGLPYDMLYR (193 aa)) constitute a GMPS ATP-PPase domain. Position 235-241 (235-241 (SGGVDSS)) interacts with ATP.

As to quaternary structure, homodimer.

The enzyme catalyses XMP + L-glutamine + ATP + H2O = GMP + L-glutamate + AMP + diphosphate + 2 H(+). It functions in the pathway purine metabolism; GMP biosynthesis; GMP from XMP (L-Gln route): step 1/1. In terms of biological role, catalyzes the synthesis of GMP from XMP. This is GMP synthase [glutamine-hydrolyzing] from Salmonella arizonae (strain ATCC BAA-731 / CDC346-86 / RSK2980).